Reading from the N-terminus, the 271-residue chain is 5'-AMP-activated protein kinase subunit beta-2 (271 aa).

Residues 1–47 are disordered; that stretch reads MGNTTSERVSGERHGAKAARAEGGGHGPGKEHKIMVGSTDDPSVFSL. Residue Ser38 is modified to Phosphoserine; by ULK1. A Phosphothreonine; by ULK1 modification is found at Thr39. Ser68 carries the post-translational modification Phosphoserine; by ULK1. Residues Ser94 and Ser107 each carry the phosphoserine modification. The residue at position 147 (Thr147) is a Phosphothreonine. Ser157 and Ser169 each carry phosphoserine. The residue at position 173 (Ser173) is a Phosphoserine; by ULK1. Phosphoserine is present on Ser183.

This sequence belongs to the 5'-AMP-activated protein kinase beta subunit family. As to quaternary structure, AMPK is a heterotrimer of an alpha catalytic subunit (PRKAA1 or PRKAA2), a beta (PRKAB1 or PRKAB2) and a gamma non-catalytic subunits (PRKAG1, PRKAG2 or PRKAG3). In terms of processing, phosphorylated when associated with the catalytic subunit (PRKAA1 or PRKAA2). Phosphorylated by ULK1 and ULK2; leading to negatively regulate AMPK activity and suggesting the existence of a regulatory feedback loop between ULK1, ULK2 and AMPK.

Its function is as follows. Non-catalytic subunit of AMP-activated protein kinase (AMPK), an energy sensor protein kinase that plays a key role in regulating cellular energy metabolism. In response to reduction of intracellular ATP levels, AMPK activates energy-producing pathways and inhibits energy-consuming processes: inhibits protein, carbohydrate and lipid biosynthesis, as well as cell growth and proliferation. AMPK acts via direct phosphorylation of metabolic enzymes, and by longer-term effects via phosphorylation of transcription regulators. Also acts as a regulator of cellular polarity by remodeling the actin cytoskeleton; probably by indirectly activating myosin. Beta non-catalytic subunit acts as a scaffold on which the AMPK complex assembles, via its C-terminus that bridges alpha (PRKAA1 or PRKAA2) and gamma subunits (PRKAG1, PRKAG2 or PRKAG3). The protein is 5'-AMP-activated protein kinase subunit beta-2 (Prkab2) of Rattus norvegicus (Rat).